The primary structure comprises 285 residues: uncharacterized protein (285 aa).

2 disordered regions span residues A115–N139 and E152–V183. Basic and acidic residues-rich tracts occupy residues K128–R138 and E152–T170.

This is an uncharacterized protein from Escherichia coli (strain K12).